A 567-amino-acid chain; its full sequence is Maltase A2 (567 aa).

An N-terminal signal peptide occupies residues 1 to 23 (MPKWAHLGLAALLLISTTQEGTA). Asparagine 30, asparagine 124, and asparagine 198 each carry an N-linked (GlcNAc...) asparagine glycan. Catalysis depends on aspartate 226, which acts as the Nucleophile. Catalysis depends on glutamate 298, which acts as the Proton donor. Residue asparagine 312 is glycosylated (N-linked (GlcNAc...) asparagine).

It belongs to the glycosyl hydrolase 13 family.

It carries out the reaction Hydrolysis of terminal, non-reducing (1-&gt;4)-linked alpha-D-glucose residues with release of alpha-D-glucose.. The protein is Maltase A2 (Mal-A2) of Drosophila melanogaster (Fruit fly).